Reading from the N-terminus, the 1009-residue chain is Type VII secretion system accessory factor EsaA (1009 aa).

The next 6 membrane-spanning stretches (helical) occupy residues 7–27 (IYALIVTLIIIIAIVSMIFFV), 822–842 (ISPTLFVLLMYLLSMITAYIF), 869–889 (VITSGVIGTTGLVEGLIVGLI), 903–923 (KFILMVILTMMVFVLINTYLL), 928–948 (SIGMFLMIAALGLYFVAMNNL), and 979–999 (IGLALVILTVLVIIGFVLNMF).

This sequence belongs to the EsaA family. Homodimer. Interacts with EssB.

It localises to the cell membrane. In terms of biological role, component of the type VII secretion system (Ess). Provides together with EssB and other components such as EssC and EssE a secretion platform across the cytoplasmic membrane in the host. The polypeptide is Type VII secretion system accessory factor EsaA (Staphylococcus aureus (strain MSSA476)).